The sequence spans 458 residues: ATP synthase subunit beta (458 aa).

ATP is bound at residue 148–155; it reads GGAGVGKT.

The protein belongs to the ATPase alpha/beta chains family. As to quaternary structure, F-type ATPases have 2 components, CF(1) - the catalytic core - and CF(0) - the membrane proton channel. CF(1) has five subunits: alpha(3), beta(3), gamma(1), delta(1), epsilon(1). CF(0) has three main subunits: a(1), b(2) and c(9-12). The alpha and beta chains form an alternating ring which encloses part of the gamma chain. CF(1) is attached to CF(0) by a central stalk formed by the gamma and epsilon chains, while a peripheral stalk is formed by the delta and b chains.

The protein localises to the cell inner membrane. The enzyme catalyses ATP + H2O + 4 H(+)(in) = ADP + phosphate + 5 H(+)(out). Its function is as follows. Produces ATP from ADP in the presence of a proton gradient across the membrane. The catalytic sites are hosted primarily by the beta subunits. This chain is ATP synthase subunit beta, found in Pseudomonas fluorescens (strain SBW25).